Consider the following 743-residue polypeptide: Dynein regulatory complex protein 1 homolog (743 aa).

2 stretches are compositionally biased toward acidic residues: residues 1 to 10 (MDDNEDELEE) and 19 to 28 (SVEEEEEVEP). The tract at residues 1–34 (MDDNEDELEEHQELVSDGSVEEEEEVEPDLGPVD) is disordered. 2 coiled-coil regions span residues 175-332 (DQIE…VLMN) and 395-416 (KLHSNINDMESKAHQARLNNRE). The disordered stretch occupies residues 599–620 (NRLQGAAGGQPDEKEHRSTGDT). Residues 715 to 742 (KMRVQYDAEVVFLRRQNEELRHLLQKFT) adopt a coiled-coil conformation.

The protein belongs to the DRC1 family.

In Drosophila melanogaster (Fruit fly), this protein is Dynein regulatory complex protein 1 homolog.